The chain runs to 437 residues: Transcriptional modulator WTM1 (437 aa).

Residues 103-144 (YQGETVSKMAYLDKTGETTLLSMSKNGSLAWFKEGIKVPIHI) form a WD 1 repeat. Threonine 187 bears the Phosphothreonine mark. Serine 200 is subject to Phosphoserine. 3 WD repeats span residues 221-259 (PGTT…KPIW), 264-304 (PKNG…AATT), and 326-366 (AGGD…SKYN). Residues 368–404 (DDTIAPPQDATEESQTKSLRFLHKGGSRRSPKQIGRR) form a disordered region. A Phosphothreonine modification is found at threonine 370. Residues 387–402 (RFLHKGGSRRSPKQIG) show a composition bias toward basic residues. A Phosphothreonine modification is found at threonine 406.

In terms of assembly, interacts with KAP122.

The protein resides in the cytoplasm. It localises to the nucleus. In terms of biological role, transcriptional modulator with roles in meiotic regulation and silencing. Acts either as an adapter to facilitate nuclear import by KAP122 of the RNR2-RNR4 heterodimer, also called beta-beta' subunit, which corresponds to the small subunit of the ribonucleotide reductase (RNR); or as an anchor to retain RNR2-RNR4 in the nucleus. The protein is Transcriptional modulator WTM1 (WTM1) of Saccharomyces cerevisiae (strain ATCC 204508 / S288c) (Baker's yeast).